The sequence spans 360 residues: 3-isopropylmalate dehydrogenase (360 aa).

Residue Gly76–Glu89 coordinates NAD(+). Arg96, Arg106, Arg134, and Asp224 together coordinate substrate. Residues Asp224, Asp248, and Asp252 each contribute to the Mg(2+) site. Gly282–Asn294 serves as a coordination point for NAD(+).

The protein belongs to the isocitrate and isopropylmalate dehydrogenases family. LeuB type 1 subfamily. Homodimer. Mg(2+) is required as a cofactor. The cofactor is Mn(2+).

The protein localises to the cytoplasm. The enzyme catalyses (2R,3S)-3-isopropylmalate + NAD(+) = 4-methyl-2-oxopentanoate + CO2 + NADH. It functions in the pathway amino-acid biosynthesis; L-leucine biosynthesis; L-leucine from 3-methyl-2-oxobutanoate: step 3/4. In terms of biological role, catalyzes the oxidation of 3-carboxy-2-hydroxy-4-methylpentanoate (3-isopropylmalate) to 3-carboxy-4-methyl-2-oxopentanoate. The product decarboxylates to 4-methyl-2 oxopentanoate. This Pseudomonas putida (strain ATCC 47054 / DSM 6125 / CFBP 8728 / NCIMB 11950 / KT2440) protein is 3-isopropylmalate dehydrogenase.